The chain runs to 61 residues: Large ribosomal subunit protein bL32 (61 aa).

Residues 1–16 are compositionally biased toward basic residues; that stretch reads MAVPKRKTSPSKRGMR. A disordered region spans residues 1–35; that stretch reads MAVPKRKTSPSKRGMRRSADGLKSATYVEDKNSGE.

Belongs to the bacterial ribosomal protein bL32 family.

The sequence is that of Large ribosomal subunit protein bL32 from Agrobacterium fabrum (strain C58 / ATCC 33970) (Agrobacterium tumefaciens (strain C58)).